The chain runs to 93 residues: Acylphosphatase (93 aa).

The 87-residue stretch at 5 to 91 (RAHFLVKGFV…RGETTFRIRS (87 aa)) folds into the Acylphosphatase-like domain. Residues Arg-20 and Asn-38 contribute to the active site.

This sequence belongs to the acylphosphatase family.

It carries out the reaction an acyl phosphate + H2O = a carboxylate + phosphate + H(+). The polypeptide is Acylphosphatase (acyP) (Moorella thermoacetica (strain ATCC 39073 / JCM 9320)).